The primary structure comprises 63 residues: Large ribosomal subunit protein bL28 (63 aa).

This sequence belongs to the bacterial ribosomal protein bL28 family.

The protein is Large ribosomal subunit protein bL28 of Heliobacterium modesticaldum (strain ATCC 51547 / Ice1).